Consider the following 450-residue polypeptide: tRNA-2-methylthio-N(6)-dimethylallyladenosine synthase (450 aa).

One can recognise an MTTase N-terminal domain in the interval 17–131 (KKFFVKTYGC…LNHVLDEVLA (115 aa)). Positions 26, 62, 94, 168, 172, and 175 each coordinate [4Fe-4S] cluster. In terms of domain architecture, Radical SAM core spans 154-385 (REDQIKAYVS…LQLQDTIYMK (232 aa)). One can recognise a TRAM domain in the interval 388-450 (QAFLGQTVEV…SHQTLLGDLQ (63 aa)).

The protein belongs to the methylthiotransferase family. MiaB subfamily. Monomer. The cofactor is [4Fe-4S] cluster.

It is found in the cytoplasm. The catalysed reaction is N(6)-dimethylallyladenosine(37) in tRNA + (sulfur carrier)-SH + AH2 + 2 S-adenosyl-L-methionine = 2-methylsulfanyl-N(6)-dimethylallyladenosine(37) in tRNA + (sulfur carrier)-H + 5'-deoxyadenosine + L-methionine + A + S-adenosyl-L-homocysteine + 2 H(+). Catalyzes the methylthiolation of N6-(dimethylallyl)adenosine (i(6)A), leading to the formation of 2-methylthio-N6-(dimethylallyl)adenosine (ms(2)i(6)A) at position 37 in tRNAs that read codons beginning with uridine. The polypeptide is tRNA-2-methylthio-N(6)-dimethylallyladenosine synthase (Protochlamydia amoebophila (strain UWE25)).